Here is a 147-residue protein sequence, read N- to C-terminus: MVSSVKMILALTVLATVACTGYAIKCYQCDSLTNSECGKDIKSDSSLVLDCTKMAPPRFLQNFFPVRNATGCMKQTIDIPGNPQIVRSCYFGNIADTKVGCQTDPSLTINKLLSCEVCTEDECNGTSSLAPIAGVILLFFGLARLLA.

The signal sequence occupies residues 1–23 (MVSSVKMILALTVLATVACTGYA). Topologically, residues 24–126 (IKCYQCDSLT…VCTEDECNGT (103 aa)) are extracellular. Cystine bridges form between cysteine 26–cysteine 72, cysteine 29–cysteine 37, cysteine 51–cysteine 89, cysteine 101–cysteine 115, and cysteine 118–cysteine 123. A glycan (N-linked (GlcNAc...) asparagine) is linked at asparagine 68. Asparagine 124 carries the GPI-anchor amidated asparagine lipid modification. Positions 125–147 (GTSSLAPIAGVILLFFGLARLLA) are cleaved as a propeptide — removed in mature form. The helical transmembrane segment at 127 to 147 (SSLAPIAGVILLFFGLARLLA) threads the bilayer.

It belongs to the quiver family.

The protein resides in the cell membrane. Functionally, may be involved in regulating neuron excitability. The sequence is that of UPAR/Ly6 domain-containing protein CG9338 from Drosophila melanogaster (Fruit fly).